Here is a 488-residue protein sequence, read N- to C-terminus: NAD-reducing hydrogenase HoxS subunit beta (488 aa).

The Ni(2+) site is built by C62, C65, C458, and C461.

It belongs to the [NiFe]/[NiFeSe] hydrogenase large subunit family. In terms of assembly, tetramer of an alpha and a gamma subunits (flavin-containing dimer), and a delta and a nickel-containing beta subunits (hydrogenase dimer). FMN is required as a cofactor. Requires Ni(2+) as cofactor.

It is found in the cytoplasm. The catalysed reaction is H2 + NAD(+) = NADH + H(+). This chain is NAD-reducing hydrogenase HoxS subunit beta (hoxH), found in Cupriavidus necator (strain ATCC 17699 / DSM 428 / KCTC 22496 / NCIMB 10442 / H16 / Stanier 337) (Ralstonia eutropha).